A 167-amino-acid chain; its full sequence is Nucleoside diphosphate kinase (167 aa).

ATP is bound by residues lysine 11, arginine 92, threonine 98, arginine 109, and asparagine 129. Histidine 132 acts as the Pros-phosphohistidine intermediate in catalysis.

This sequence belongs to the NDK family. Homotetramer. Requires Mg(2+) as cofactor.

The protein localises to the cytoplasm. It carries out the reaction a 2'-deoxyribonucleoside 5'-diphosphate + ATP = a 2'-deoxyribonucleoside 5'-triphosphate + ADP. It catalyses the reaction a ribonucleoside 5'-diphosphate + ATP = a ribonucleoside 5'-triphosphate + ADP. Functionally, major role in the synthesis of nucleoside triphosphates other than ATP. The ATP gamma phosphate is transferred to the NDP beta phosphate via a ping-pong mechanism, using a phosphorylated active-site intermediate. The polypeptide is Nucleoside diphosphate kinase (ndk) (Borreliella burgdorferi (strain ATCC 35210 / DSM 4680 / CIP 102532 / B31) (Borrelia burgdorferi)).